The sequence spans 186 residues: Ribosome-recycling factor (186 aa).

This sequence belongs to the RRF family.

The protein resides in the cytoplasm. In terms of biological role, responsible for the release of ribosomes from messenger RNA at the termination of protein biosynthesis. May increase the efficiency of translation by recycling ribosomes from one round of translation to another. This chain is Ribosome-recycling factor, found in Leifsonia xyli subsp. xyli (strain CTCB07).